The following is a 705-amino-acid chain: Phycobiliprotein ApcE (705 aa).

A phycobilin-like 1 region spans residues 18–76; the sequence is QTVPGSTIVQAEQQDRFPQQGELRELSSYFQSGLKRLAIAEIITRNSDTIVSRAANRIF. The segment at 77–145 is phycobilin-like loop; sequence VGGSPLAYIE…VRIPSGFRPI (69 aa). A phycobilin-like 2 region spans residues 146–238; that stretch reads NVARYGPRNM…YFDVLIREFE (93 aa). C196 contacts (2R,3E)-phycocyanobilin. 2 consecutive PBS-linker domains span residues 253 to 433 and 514 to 691; these read DQQG…FVKV and KIFK…SLRP. A disordered region spans residues 685–705; sequence VKASLRPAAGAQERRPEVGRR. Positions 696 to 705 are enriched in basic and acidic residues; sequence QERRPEVGRR.

Belongs to the phycobilisome linker protein family. In terms of assembly, phycobilisomes of this organism are composed of a two cylinder core, from which six rods radiate. The core is mainly composed of allophycocyanin alpha and beta chains, and of three minor components: the allophycocyanin alpha-B chain, a 18.3 kDa polypeptide, and the anchor polypeptide L-CM. Post-translationally, contains one covalently linked bilin chromophore. This protein autochromophorylates.

It is found in the cellular thylakoid membrane. Its function is as follows. This protein is postulated to act both as terminal energy acceptor (by its phycobilin-like domains) and as a linker polypeptide (by its repeats and arms) that stabilizes the phycobilisome core architecture. Has intrinsic bilin lyase activity. The chain is Phycobiliprotein ApcE (apcE) from Synechococcus sp. (strain ATCC 27144 / PCC 6301 / SAUG 1402/1) (Anacystis nidulans).